The chain runs to 747 residues: AMP deaminase 1 (747 aa).

Threonine 81 bears the Phosphothreonine mark. Serine 85 is subject to Phosphoserine. Tyrosine 216 carries the post-translational modification Phosphotyrosine. Histidine 303 and histidine 305 together coordinate Zn(2+). Residues histidine 305 and 374 to 379 (KFNDKY) each bind substrate. Serine 441 is modified (phosphoserine). Histidine 572 is a binding site for Zn(2+). Position 575 (glutamate 575) interacts with substrate. The active-site Proton acceptor is histidine 594. Aspartate 649 contributes to the Zn(2+) binding site. 650–653 (DPMQ) serves as a coordination point for substrate.

It belongs to the metallo-dependent hydrolases superfamily. Adenosine and AMP deaminases family. As to quaternary structure, homotetramer. It depends on Zn(2+) as a cofactor.

It catalyses the reaction AMP + H2O + H(+) = IMP + NH4(+). It functions in the pathway purine metabolism; IMP biosynthesis via salvage pathway; IMP from AMP: step 1/1. AMP deaminase plays a critical role in energy metabolism. This is AMP deaminase 1 from Homo sapiens (Human).